The sequence spans 1287 residues: DENN domain-containing protein 5A (1287 aa).

Residues 57 to 259 (STTEGENFEQ…EVPLPPPGRS (203 aa)) form the uDENN domain. Ser193 carries the post-translational modification Phosphoserine. The cDENN domain maps to 278–414 (ELPLFDFPVK…LEFVQEVSEI (137 aa)). Residues 416–598 (MAFGVPPEGN…IMCHDDDDKD (183 aa)) form the dDENN domain. The region spanning 787–950 (VEENTLIASL…DYFCFTNVFT (164 aa)) is the RUN 1 domain. Residues 954-1062 (IPYHILIVPS…DDGSLERVLV (109 aa)) form the PLAT domain. Position 1079 is a phosphothreonine (Thr1079). Ser1085, Ser1087, and Ser1096 each carry phosphoserine. The RUN 2 domain occupies 1134–1280 (TLLLCGECGL…QEFNITLDTS (147 aa)).

The protein belongs to the RAB6IP1 family. Interacts with RAB6A bound to GTP.

It localises to the golgi apparatus membrane. Guanine nucleotide exchange factor (GEF) which may activate RAB6A and RAB39A and/or RAB39B. Promotes the exchange of GDP to GTP, converting inactive GDP-bound Rab proteins into their active GTP-bound form. Involved in the negative regulation of neurite outgrowth. The sequence is that of DENN domain-containing protein 5A (Dennd5a) from Mus musculus (Mouse).